A 377-amino-acid chain; its full sequence is ATP phosphoribosyltransferase regulatory subunit (377 aa).

It belongs to the class-II aminoacyl-tRNA synthetase family. HisZ subfamily. As to quaternary structure, heteromultimer composed of HisG and HisZ subunits.

Its subcellular location is the cytoplasm. It functions in the pathway amino-acid biosynthesis; L-histidine biosynthesis; L-histidine from 5-phospho-alpha-D-ribose 1-diphosphate: step 1/9. In terms of biological role, required for the first step of histidine biosynthesis. May allow the feedback regulation of ATP phosphoribosyltransferase activity by histidine. The chain is ATP phosphoribosyltransferase regulatory subunit from Sinorhizobium medicae (strain WSM419) (Ensifer medicae).